The sequence spans 127 residues: Small ribosomal subunit protein eS8 (127 aa).

This sequence belongs to the eukaryotic ribosomal protein eS8 family. In terms of assembly, part of the 30S ribosomal subunit.

In Pyrococcus horikoshii (strain ATCC 700860 / DSM 12428 / JCM 9974 / NBRC 100139 / OT-3), this protein is Small ribosomal subunit protein eS8 (rps8e).